A 229-amino-acid polypeptide reads, in one-letter code: Prolactin (229 aa).

An N-terminal signal peptide occupies residues 1-30; sequence MDKKGWSLKGSLLPLLLLVSDLLLCQSVAS. A disulfide bond links cysteine 34 and cysteine 41. Residues serine 56, serine 64, and serine 120 each carry the phosphoserine modification. 2 disulfides stabilise this stretch: cysteine 88-cysteine 204 and cysteine 221-cysteine 229.

This sequence belongs to the somatotropin/prolactin family. Interacts with PRLR.

It localises to the secreted. Its function is as follows. Prolactin acts primarily on the mammary gland by promoting lactation. This is Prolactin (PRL) from Ailuropoda melanoleuca (Giant panda).